The following is a 248-amino-acid chain: MRLIQNMCTIAEYPAPGNAAASDCCVGAAGRRLVKIAVVGASGVGKTALVVRFLTKRFIGDYERNAGNLYTRQVQIEGETLALQVQDTPGIQVHENSLSCSEQLNRCIRWADAVVIVFSITDYKSYELISQLHQHVQQLHLGTRLPVVVVANKADLLHIKQVDPQLGLQLASMLGCSFYEVSVSENYNDVYSAFHVLCKEVSHKQQPSSTPEKRRTSLIPRPKSPNMQDLKRRFKQALSAKVRTVTSV.

The small GTPase-like stretch occupies residues 29–246; the sequence is AGRRLVKIAV…ALSAKVRTVT (218 aa). GTP-binding positions include 40–47, 87–94, and 152–155; these read GASGVGKT, DTPGIQVH, and NKAD. The disordered stretch occupies residues 205–226; it reads QQPSSTPEKRRTSLIPRPKSPN.

It belongs to the small GTPase superfamily. Ras family. In terms of tissue distribution, widely expressed with highest levels in placenta and primary macrophages.

The enzyme catalyses GTP + H2O = GDP + phosphate + H(+). The polypeptide is Ras-like protein family member 11B (Homo sapiens (Human)).